Consider the following 1193-residue polypeptide: MSTSSFVHLHIHTEFSLADSTIRVPEKPEQAHPKKAKQANLLSRAVELGLPALAVTDLNNLFALIKFYKAAETVGIKPISGADLLIAEPEHPPWGMTLLCRDHAGYLNLSQLISRGWLEGHRPEGGVAVHPDWVRDHHKNLFALIGRHSLAGQLLAKGRADLAEQQLADWQHVFGDGLHLELTRTGRDGEEPFNQFALQVAGIRGIPVIASNDVRFLVQSDFLAHEARVCIASGRMLDDPKRPRTYSEQQYLRSSEEMAALFADIPDALDNTRTLAQRCNIEMRLGTYFLPNYPVPNDETLDSWIRKQSHEGLEARLLKHPLAPGQTREDYVTRLEFELDTIIKMGFSGYFLIVADFIQWGKQQGIPIGPGRGSGAGSLVAWALLITDLDPLPYNLLFERFLNPERVSMPDFDIDFCMERRDEVISYVARKYGRERVSQIITYGTMAAKAVVRDVGRVLGFPYGLVDSVAKLIPSTLGITLKDAMGEGETNDNASAELIQRYQAEEDVQELLNLARQLEDLTRNAGKHAGGVVIAPNPLTEFCPLFAEHDENGRGKNPVTQFDKNDVEEVGLVKFDFLGLRTLTIIDWAVKAINKRHARACIDPVDITALPLDDIPTYKDVFASGNTSAVFQFESSGMRRLLKDARPDRFEDLIALVSLYRPGPMDLIPEFTARKHGVQETIYPDPRTKNILKDTYGIMVYQEQVMQMAQIVGGYSLGSADLLRRAMGKKVPAEMAKHREIFREGAAKGGMDAVKADEIFDLMEKFAGYGFNKSHAAAYALVSYQTAWLKRHYPAEFMAATLSSDMDNTDKVVGFLDEARNLNLKVLRPNINHSAYMFEATHADTIQYGLGAIKGVGQSVCEAIVKERLHYGPYTSLLDFCTRVTSAKLNRRALEAMIHAGALDELGKNRASVMLQLPEVIKATEQMSRERESGQNSLFGNADPGTPVIQLDLPECEEWPLTRMLNGERETLGLYFSGHPFDPYRKQVKELVGCDLNTSALERILGSQQRGNGEKRTWQPEVNTILAGLVVSVRRKGDSQVFVQLEDGRGRIECSAFSDALAEFGHLLTRDRILIVKGGLREDEFNGGYSLRIRQCWDYAQLCTDYAQRLLLRVDLRTSHAWERIDAILARYRPGNTPLRLDLLLNSTHGPVAGTLDLSGGQSVRIEQSLLDKLQKDPAVSKLKVKYTPPWVQ.

The protein belongs to the DNA polymerase type-C family. DnaE subfamily. As to quaternary structure, DNA polymerase III contains a core (composed of alpha, epsilon and theta chains) that associates with a tau subunit. This core dimerizes to form the PolIII' complex. PolIII' associates with the gamma complex (composed of gamma, delta, delta', psi and chi chains) and with the beta chain to form the complete DNA polymerase III complex.

Its subcellular location is the cytoplasm. The enzyme catalyses DNA(n) + a 2'-deoxyribonucleoside 5'-triphosphate = DNA(n+1) + diphosphate. DNA polymerase III is a complex, multichain enzyme responsible for most of the replicative synthesis in bacteria. This DNA polymerase also exhibits 3' to 5' exonuclease activity. The alpha chain is the DNA polymerase. The chain is DNA polymerase III subunit alpha (dnaE) from Xylella fastidiosa (strain Temecula1 / ATCC 700964).